The chain runs to 872 residues: DNA mismatch repair protein MutS (872 aa).

602–609 contacts ATP; it reads GPNMSGKS.

Belongs to the DNA mismatch repair MutS family.

In terms of biological role, this protein is involved in the repair of mismatches in DNA. It is possible that it carries out the mismatch recognition step. This protein has a weak ATPase activity. The chain is DNA mismatch repair protein MutS from Staphylococcus aureus (strain Mu3 / ATCC 700698).